Consider the following 191-residue polypeptide: Peptide methionine sulfoxide reductase (191 aa).

Disordered stretches follow at residues 1–20 and 168–191; these read MASS…TPEN and EKGG…KCYG.

The protein belongs to the MsrA Met sulfoxide reductase family.

It catalyses the reaction L-methionyl-[protein] + [thioredoxin]-disulfide + H2O = L-methionyl-(S)-S-oxide-[protein] + [thioredoxin]-dithiol. The catalysed reaction is [thioredoxin]-disulfide + L-methionine + H2O = L-methionine (S)-S-oxide + [thioredoxin]-dithiol. Its function is as follows. Has an important function as a repair enzyme for proteins that have been inactivated by oxidation. Catalyzes the reversible oxidation-reduction of methionine sulfoxide in proteins to methionine. This Fragaria ananassa (Strawberry) protein is Peptide methionine sulfoxide reductase.